We begin with the raw amino-acid sequence, 397 residues long: Tyrosine--tRNA ligase (397 aa).

A 'HIGH' region motif is present at residues P41–H50. Residues K225–S229 carry the 'KMSKS' region motif. Residue K228 participates in ATP binding. An S4 RNA-binding domain is found at A340–V396.

The protein belongs to the class-I aminoacyl-tRNA synthetase family. TyrS type 2 subfamily. As to quaternary structure, homodimer.

It localises to the cytoplasm. It catalyses the reaction tRNA(Tyr) + L-tyrosine + ATP = L-tyrosyl-tRNA(Tyr) + AMP + diphosphate + H(+). Its function is as follows. Catalyzes the attachment of tyrosine to tRNA(Tyr) in a two-step reaction: tyrosine is first activated by ATP to form Tyr-AMP and then transferred to the acceptor end of tRNA(Tyr). The polypeptide is Tyrosine--tRNA ligase (Oleidesulfovibrio alaskensis (strain ATCC BAA-1058 / DSM 17464 / G20) (Desulfovibrio alaskensis)).